A 210-amino-acid chain; its full sequence is Probable septum site-determining protein MinC (210 aa).

It belongs to the MinC family. Interacts with MinD and FtsZ.

Functionally, cell division inhibitor that blocks the formation of polar Z ring septums. Rapidly oscillates between the poles of the cell to destabilize FtsZ filaments that have formed before they mature into polar Z rings. Prevents FtsZ polymerization. The polypeptide is Probable septum site-determining protein MinC (Thermotoga neapolitana (strain ATCC 49049 / DSM 4359 / NBRC 107923 / NS-E)).